Reading from the N-terminus, the 155-residue chain is RNA pyrophosphohydrolase (155 aa).

Residues 5–147 enclose the Nudix hydrolase domain; it reads KYRPNVAAII…KRQVYRQVIA (143 aa). Residues 42 to 63 carry the Nudix box motif; sequence GGIDEGETPLEALHRELLEEIG.

It belongs to the Nudix hydrolase family. RppH subfamily. It depends on a divalent metal cation as a cofactor.

Functionally, accelerates the degradation of transcripts by removing pyrophosphate from the 5'-end of triphosphorylated RNA, leading to a more labile monophosphorylated state that can stimulate subsequent ribonuclease cleavage. This is RNA pyrophosphohydrolase from Helicobacter pylori (strain G27).